Reading from the N-terminus, the 308-residue chain is Putative integrase/recombinase y4qK (308 aa).

The Core-binding (CB) domain maps to 15-97; sequence LVMTPLRQRM…ALRFFFSVTL (83 aa). The Tyr recombinase domain occupies 115–288; that stretch reads KLPIILSPDE…ATNKVCATSS (174 aa). Catalysis depends on residues Arg-150, Lys-175, His-240, Arg-243, and His-266. Tyr-275 functions as the O-(3'-phospho-DNA)-tyrosine intermediate in the catalytic mechanism.

The protein belongs to the 'phage' integrase family.

Its function is as follows. May function as an integrase. This is Putative integrase/recombinase y4qK from Sinorhizobium fredii (strain NBRC 101917 / NGR234).